The primary structure comprises 418 residues: Tyrosine--tRNA ligase (418 aa).

Tyr34 serves as a coordination point for L-tyrosine. Positions 39–48 (PTADSLHLGH) match the 'HIGH' region motif. Tyr169 and Gln173 together coordinate L-tyrosine. Positions 229–233 (KFGKS) match the 'KMSKS' region motif. Residue Lys232 participates in ATP binding. In terms of domain architecture, S4 RNA-binding spans 352–418 (LNIVDMLVTA…GKKKYAVLTY (67 aa)).

This sequence belongs to the class-I aminoacyl-tRNA synthetase family. TyrS type 1 subfamily. As to quaternary structure, homodimer.

The protein resides in the cytoplasm. It carries out the reaction tRNA(Tyr) + L-tyrosine + ATP = L-tyrosyl-tRNA(Tyr) + AMP + diphosphate + H(+). Its function is as follows. Catalyzes the attachment of tyrosine to tRNA(Tyr) in a two-step reaction: tyrosine is first activated by ATP to form Tyr-AMP and then transferred to the acceptor end of tRNA(Tyr). The sequence is that of Tyrosine--tRNA ligase from Streptococcus equi subsp. equi (strain 4047).